The following is a 478-amino-acid chain: Serralysin C (478 aa).

A propeptide spanning residues 1–17 is cleaved from the precursor; it reads MEKNLSSRDDDALHSLS. His-187 is a Zn(2+) binding site. Glu-188 is an active-site residue. 2 residues coordinate Zn(2+): His-191 and Tyr-227. Ca(2+) is bound by residues Arg-264, Gly-266, Asp-296, Gly-298, Gly-299, Asp-301, Thr-338, Glu-340, Gly-345, Gly-347, Asp-349, Asn-354, Ala-356, Asn-358, Gly-362, Gly-363, Ala-364, Gly-365, Asp-367, Gly-371, Gly-372, Gly-374, Asp-376, Gly-380, Gly-381, Gly-383, Asp-385, Asp-394, Asp-401, and Asp-411. Hemolysin-type calcium-binding repeat units follow at residues 343–360 and 361–378; these read IGGS…DNTL and RGGA…ADRL.

It belongs to the peptidase M10B family. The cofactor is Ca(2+). Requires Zn(2+) as cofactor.

The protein resides in the secreted. The enzyme catalyses Preferential cleavage of bonds with hydrophobic residues in P1'.. The chain is Serralysin C (prtC) from Dickeya chrysanthemi (Pectobacterium chrysanthemi).